We begin with the raw amino-acid sequence, 345 residues long: Fructose-1,6-bisphosphatase class 1 (345 aa).

Mg(2+) is bound by residues E90, D109, L111, and D112. Substrate-binding positions include D112–S115 and N200. E272 is a binding site for Mg(2+).

The protein belongs to the FBPase class 1 family. Homotetramer. It depends on Mg(2+) as a cofactor.

It localises to the cytoplasm. The catalysed reaction is beta-D-fructose 1,6-bisphosphate + H2O = beta-D-fructose 6-phosphate + phosphate. It functions in the pathway carbohydrate biosynthesis; gluconeogenesis. This chain is Fructose-1,6-bisphosphatase class 1, found in Bradyrhizobium diazoefficiens (strain JCM 10833 / BCRC 13528 / IAM 13628 / NBRC 14792 / USDA 110).